Here is a 162-residue protein sequence, read N- to C-terminus: MRAPIPEPKPGDLIEIFRPFYRHWAIYVGDGYVVHLAPPSEVAGAGAASVMSALTDKAIVKKELLYDVAGSDKYQVNNKHDDKYSPLPCSKIIQRAEELVGQEVLYKLTSENCEHFVNELRYGVARSDQVRDVIIAASVAGMGLAAMSLIGVMFSRNKRQKQ.

Residues 1–133 (MRAPIPEPKP…VARSDQVRDV (133 aa)) are Cytoplasmic-facing. Residues 13-129 (LIEIFRPFYR…LRYGVARSDQ (117 aa)) enclose the LRAT domain. Catalysis depends on residues His-23 and His-35. Cys-113 (acyl-thioester intermediate) is an active-site residue. A helical transmembrane segment spans residues 134–154 (IIAASVAGMGLAAMSLIGVMF). The Lumenal portion of the chain corresponds to 155–162 (SRNKRQKQ).

It belongs to the H-rev107 family. Interacts with PPP2R1A; this interaction might decrease PP2A activity. Widely expressed. Low expression, if any, in hematopoietic cells and thymus. In testis, confined to round spermatids. Expressed in normal ovarian epithelial cells. Down-regulated in some ovarian carcinomas and testicular germ cell tumors. Highly expressed in white adipose tissue.

It localises to the cell membrane. Its subcellular location is the cytoplasm. It is found in the cytosol. The protein resides in the perinuclear region. The protein localises to the peroxisome membrane. It localises to the mitochondrion membrane. Its subcellular location is the nucleus envelope. It is found in the lysosome membrane. The protein resides in the endoplasmic reticulum membrane. The enzyme catalyses a 1,2-diacyl-sn-glycero-3-phosphocholine + H2O = a 1-acyl-sn-glycero-3-phosphocholine + a fatty acid + H(+). It catalyses the reaction a 1,2-diacyl-sn-glycero-3-phosphocholine + H2O = a 2-acyl-sn-glycero-3-phosphocholine + a fatty acid + H(+). It carries out the reaction 1,2-dihexadecanoyl-sn-glycero-3-phosphocholine + H2O = 1-hexadecanoyl-sn-glycero-3-phosphocholine + hexadecanoate + H(+). The catalysed reaction is 1,2-dihexadecanoyl-sn-glycero-3-phosphocholine + H2O = 2-hexadecanoyl-sn-glycero-3-phosphocholine + hexadecanoate + H(+). The enzyme catalyses 1-hexadecanoyl-2-(9Z-octadecenoyl)-sn-glycero-3-phosphocholine + H2O = 2-(9Z-octadecenoyl)-sn-glycero-3-phosphocholine + hexadecanoate + H(+). It catalyses the reaction 1-hexadecanoyl-2-(9Z-octadecenoyl)-sn-glycero-3-phosphocholine + H2O = 1-hexadecanoyl-sn-glycero-3-phosphocholine + (9Z)-octadecenoate + H(+). It carries out the reaction 1-hexadecanoyl-2-(5Z,8Z,11Z,14Z-eicosatetraenoyl)-sn-glycero-3-phosphocholine + H2O = 1-hexadecanoyl-sn-glycero-3-phosphocholine + (5Z,8Z,11Z,14Z)-eicosatetraenoate + H(+). The catalysed reaction is 1-hexadecanoyl-2-(5Z,8Z,11Z,14Z-eicosatetraenoyl)-sn-glycero-3-phosphocholine + H2O = 2-(5Z,8Z,11Z,14Z)-eicosatetraenoyl-sn-glycero-3-phosphocholine + hexadecanoate + H(+). The enzyme catalyses 1-hexadecanoyl-2-(9Z,12Z-octadecadienoyl)-sn-glycero-3-phosphoethanolamine + H2O = 1-hexadecanoyl-sn-glycero-3-phosphoethanolamine + (9Z,12Z)-octadecadienoate + H(+). It catalyses the reaction 1-hexadecanoyl-2-(9Z,12Z-octadecadienoyl)-sn-glycero-3-phosphoethanolamine + H2O = 2-(9Z,12Z)-octadecadienoyl-sn-glycero-3-phosphoethanolamine + hexadecanoate + H(+). It carries out the reaction 1-hexadecanoyl-2-(5Z,8Z,11Z,14Z-eicosatetraenoyl)-sn-glycero-3-phosphoethanolamine + H2O = 1-hexadecanoyl-sn-glycero-3-phosphoethanolamine + (5Z,8Z,11Z,14Z)-eicosatetraenoate + H(+). The catalysed reaction is 1-hexadecanoyl-2-(5Z,8Z,11Z,14Z-eicosatetraenoyl)-sn-glycero-3-phosphoethanolamine + H2O = 2-(5Z,8Z,11Z,14Z)-eicosatetraenoyl-sn-glycero-3-phosphoethanolamine + hexadecanoate + H(+). The enzyme catalyses 1-hexanoyl-2-acyl-sn-glycero-3-phosphocholine + H2O = hexanoate + a 2-acyl-sn-glycero-3-phosphocholine + H(+). It catalyses the reaction 1-hexanoyl-2-acyl-sn-glycero-3-phosphocholine + H2O = 1-hexanoyl-sn-glycero-3-phosphocholine + a fatty acid + H(+). It carries out the reaction 1,2-diheptadecanoyl-sn-glycero-3-phosphoethanolamine + 1-(9Z-octadecenoyl)-2-hexadecanoyl-sn-glycero-3-phosphocholine = 1,2-diheptadecanoyl-sn-glycero-3-phospho-N-hexadecanoyl-ethanolamine + 1-(9Z-octadecenoyl)-sn-glycero-3-phosphocholine + H(+). The catalysed reaction is 1,2-diheptadecanoyl-sn-glycero-3-phosphoethanolamine + 1-(9Z-octadecenoyl)-2-hexadecanoyl-sn-glycero-3-phosphocholine = 1,2-diheptadecanoyl-sn-glycero-3-phospho-N-(9Z-octadecenoyl)-ethanolamine + 2-hexadecanoyl-sn-glycero-3-phosphocholine + H(+). The enzyme catalyses 1,2-dihexanoyl-sn-glycero-3-phosphoethanolamine + 2-heptanoyl-sn-glycero-3-phosphocholine = hexanoyl-sn-glycero-3-phosphoethanolamine + 1-hexanoyl-2-heptanoyl-sn-glycero-3-phosphocholine. It catalyses the reaction 1-hexadecanoyl-2-octadecanoyl-sn-glycero-3-phosphocholine + H2O = octadecanoate + 1-hexadecanoyl-sn-glycero-3-phosphocholine + H(+). It carries out the reaction 1-hexadecanoyl-2-octadecanoyl-sn-glycero-3-phosphocholine + H2O = 2-octadecanoyl-sn-glycero-3-phosphocholine + hexadecanoate + H(+). The catalysed reaction is 1-octadecanoyl-2-hexadecanoyl-sn-glycero-3-phosphocholine + H2O = 1-octadecanoyl-sn-glycero-3-phosphocholine + hexadecanoate + H(+). The enzyme catalyses 1-octadecanoyl-2-hexadecanoyl-sn-glycero-3-phosphocholine + H2O = 2-hexadecanoyl-sn-glycero-3-phosphocholine + octadecanoate + H(+). It catalyses the reaction 1-hexadecanoyl-2-(9Z,12Z-octadecadienoyl)-sn-glycero-3-phosphocholine + H2O = (9Z,12Z)-octadecadienoate + 1-hexadecanoyl-sn-glycero-3-phosphocholine + H(+). It carries out the reaction 1-hexadecanoyl-2-(9Z,12Z-octadecadienoyl)-sn-glycero-3-phosphocholine + H2O = 2-(9Z,12Z-octadecadienoyl)-sn-glycero-3-phosphocholine + hexadecanoate + H(+). The catalysed reaction is 1,2-di-(9Z-octadecenoyl)-sn-glycero-3-phosphocholine + H2O = 2-(9Z-octadecenoyl)-sn-glycero-3-phosphocholine + (9Z)-octadecenoate + H(+). The enzyme catalyses 1,2-dihexadecanoyl-sn-glycero-3-phosphocholine + H2O = hexadecanoyl-sn-glycero-3-phosphocholine + hexadecanoate + H(+). It catalyses the reaction 1,2-di-(9Z-octadecenoyl)-sn-glycero-3-phosphocholine + H2O = 1-(9Z-octadecenoyl)-sn-glycero-3-phosphocholine + (9Z)-octadecenoate + H(+). It carries out the reaction 1,2-di-(9Z-octadecenoyl)-sn-glycero-3-phosphoethanolamine + 1,2-dihexadecanoyl-sn-glycero-3-phosphocholine = hexadecanoyl-sn-glycero-3-phosphocholine + N-hexadecanoyl-1,2-di-(9Z-octadecenoyl)-sn-glycero-3-phosphoethanolamine + H(+). The catalysed reaction is 1,2-di-(9Z,12Z-octadecadienoyl)-sn-glycero-3-phosphocholine + H2O = 1-(9Z,12Z)-octadecadienoyl-sn-glycero-3-phosphocholine + (9Z,12Z)-octadecadienoate + H(+). Exhibits both phospholipase A1/2 and acyltransferase activities. Shows phospholipase A1 (PLA1) and A2 (PLA2) activity, catalyzing the calcium-independent release of fatty acids from the sn-1 or sn-2 position of glycerophospholipids. For most substrates, PLA1 activity is much higher than PLA2 activity. Shows O-acyltransferase activity,catalyzing the transfer of a fatty acyl group from glycerophospholipid to the hydroxyl group of lysophospholipid. Shows N-acyltransferase activity, catalyzing the calcium-independent transfer of a fatty acyl group at the sn-1 position of phosphatidylcholine (PC) and other glycerophospholipids to the primary amine of phosphatidylethanolamine (PE), forming N-acylphosphatidylethanolamine (NAPE), which serves as precursor for N-acylethanolamines (NAEs). Exhibits high N-acyltransferase activity and low phospholipase A1/2 activity. Required for complete organelle rupture and degradation that occur during eye lens terminal differentiation, when fiber cells that compose the lens degrade all membrane-bound organelles in order to provide lens with transparency to allow the passage of light. Organelle membrane degradation is probably catalyzed by the phospholipase activity. In terms of biological role, (Microbial infection) Acts as a host factor for picornaviruses: required during early infection to promote viral genome release into the cytoplasm. May act as a cellular sensor of membrane damage at sites of virus entry, which relocalizes to sites of membrane rupture upon virus unfection. Facilitates safe passage of the RNA away from LGALS8, enabling viral genome translation by host ribosome. May also be involved in initiating pore formation, increasing pore size or in maintaining pores for genome delivery. The lipid-modifying enzyme activity is required for this process. In Homo sapiens (Human), this protein is Phospholipase A and acyltransferase 3.